We begin with the raw amino-acid sequence, 475 residues long: Peroxisome proliferator-activated receptor gamma (475 aa).

A glycan (O-linked (GlcNAc) threonine) is linked at T54. The residue at position 82 (S82) is a Phosphoserine; by MAPK. The nuclear receptor DNA-binding region spans A106–F180. 2 NR C4-type zinc fingers span residues C109–C129 and C146–C168. The interval H175–M250 is interaction with FAM120B. The region spanning D208–D473 is the NR LBD domain. K222 participates in a covalent cross-link: Glycyl lysine isopeptide (Lys-Gly) (interchain with G-Cter in ubiquitin). The 9aaTAD motif lies at P465–D473.

This sequence belongs to the nuclear hormone receptor family. NR1 subfamily. In terms of assembly, interacts with FOXO1 (acetylated form). Heterodimer with other nuclear receptors, such as RXRA. The heterodimer with the retinoic acid receptor RXRA is called adipocyte-specific transcription factor ARF6. Interacts with NCOA6 coactivator, leading to a strong increase in transcription of target genes. Interacts with coactivator PPARBP, leading to a mild increase in transcription of target genes. Interacts with NOCA7 in a ligand-inducible manner. Interacts with NCOA1 and NCOA2 LXXLL motifs. Interacts with ASXL1, ASXL2, DNTTIP2, FAM120B, MAP2K1/MEK1, NR0B2, PDPK1, PRDM16, PRMT2 and TGFB1I1. Interacts (when activated by agonist) with PPP5C. Interacts with HELZ2 and THRAP3; the interaction stimulates the transcriptional activity of PPARG. Interacts with PER2, the interaction is ligand dependent and blocks PPARG recruitment to target promoters. Interacts with NOCT. Interacts with ACTN4. Interacts (when in the liganded conformation) with GPS2. Interacts with CRY1 and CRY2 in a ligand-dependent manner. In the absence of hormonal ligand, interacts with TACC1. In macrophages, interacts with PAQR3 and STUB1; the interactions promote PPARG poylubiquitination and STUB1-mediated degradation. Post-translationally, O-GlcNAcylation at Thr-54 reduces transcriptional activity in adipocytes. In terms of processing, phosphorylated at basal conditions and dephosphorylated when treated with the ligand. May be dephosphorylated by PPP5C. The phosphorylated form may be inactive and dephosphorylation induces adipogenic activity. Ubiquitinated by E3 ubiquitin-protein ligase complex containing FBXO9; leading to proteasomal degradation. Ubiquitinated at Lys-222 by TRIM55 leading to proteasomal degradation. Ubiquitinated by E3 ubiquitin-protein ligase STUB1/CHIP; leading to proteasomal degradation.

Its subcellular location is the nucleus. The protein resides in the cytoplasm. PDPK1 activates its transcriptional activity independently of its kinase activity. Interacts with HELZ2 and THRAP3; the interaction enhances the transcriptional activity of PPARG. Functionally, nuclear receptor that binds peroxisome proliferators such as hypolipidemic drugs and fatty acids. Once activated by a ligand, the nuclear receptor binds to DNA specific PPAR response elements (PPRE) and modulates the transcription of its target genes, such as acyl-CoA oxidase. It therefore controls the peroxisomal beta-oxidation pathway of fatty acids. Key regulator of adipocyte differentiation and glucose homeostasis. ARF6 acts as a key regulator of the tissue-specific adipocyte P2 (aP2) enhancer. Acts as a critical regulator of gut homeostasis by suppressing NF-kappa-B-mediated pro-inflammatory responses. Plays a role in the regulation of cardiovascular circadian rhythms by regulating the transcription of BMAL1 in the blood vessels. The polypeptide is Peroxisome proliferator-activated receptor gamma (PPARG) (Cricetulus griseus (Chinese hamster)).